The primary structure comprises 156 residues: Rhodanese-like domain-containing protein 17 (156 aa).

The 103-residue stretch at 44 to 146 (LDSGYTFLDV…WVNKRFPVKV (103 aa)) folds into the Rhodanese domain. Cys106 acts as the Cysteine persulfide intermediate in catalysis.

This chain is Rhodanese-like domain-containing protein 17 (STR17), found in Arabidopsis thaliana (Mouse-ear cress).